Consider the following 338-residue polypeptide: Probable family 20 transposase (338 aa).

This sequence belongs to the transposase 20 family.

Its function is as follows. Required for the transposition of an insertion element. The polypeptide is Probable family 20 transposase (Pseudomonas aeruginosa (strain ATCC 15692 / DSM 22644 / CIP 104116 / JCM 14847 / LMG 12228 / 1C / PRS 101 / PAO1)).